A 565-amino-acid chain; its full sequence is Calcium-dependent protein kinase 21 (565 aa).

Glycine 2 carries N-myristoyl glycine lipidation. The interval proline 28–glycine 55 is disordered. The segment covering serine 36–arginine 50 has biased composition (basic and acidic residues). In terms of domain architecture, Protein kinase spans tyrosine 77–leucine 358. ATP contacts are provided by residues leucine 83–threonine 91 and lysine 106. The active-site Proton acceptor is aspartate 224. The segment at alanine 364–valine 394 is autoinhibitory domain. EF-hand domains lie at glutamate 401–proline 436, valine 437–methionine 472, serine 473–glutamate 500, and proline 504–tryptophan 539. Positions 414, 416, 418, 420, 425, 450, 452, 454, 456, 461, 486, 488, 490, 497, 517, 519, 521, 523, and 528 each coordinate Ca(2+).

It belongs to the protein kinase superfamily. Ser/Thr protein kinase family. CDPK subfamily. In terms of tissue distribution, expressed in spikelets and developing seeds.

It localises to the membrane. It carries out the reaction L-seryl-[protein] + ATP = O-phospho-L-seryl-[protein] + ADP + H(+). The enzyme catalyses L-threonyl-[protein] + ATP = O-phospho-L-threonyl-[protein] + ADP + H(+). Activated by calcium. Autophosphorylation may play an important role in the regulation of the kinase activity. Its function is as follows. May play a role in signal transduction pathways that involve calcium as a second messenger. Functions in signal transduction pathways that positively regulate responses to abscisic acid (ABA) and salt stress. The chain is Calcium-dependent protein kinase 21 from Oryza sativa subsp. japonica (Rice).